The primary structure comprises 172 residues: Small ribosomal subunit protein uS5 (172 aa).

The S5 DRBM domain maps to methionine 17–valine 80.

The protein belongs to the universal ribosomal protein uS5 family. In terms of assembly, part of the 30S ribosomal subunit. Contacts proteins S4 and S8.

Functionally, with S4 and S12 plays an important role in translational accuracy. Located at the back of the 30S subunit body where it stabilizes the conformation of the head with respect to the body. The chain is Small ribosomal subunit protein uS5 from Herminiimonas arsenicoxydans.